We begin with the raw amino-acid sequence, 446 residues long: UDP-N-acetylmuramoylalanine--D-glutamate ligase (446 aa).

112–118 (GTNGKST) is an ATP binding site.

Belongs to the MurCDEF family.

It is found in the cytoplasm. It carries out the reaction UDP-N-acetyl-alpha-D-muramoyl-L-alanine + D-glutamate + ATP = UDP-N-acetyl-alpha-D-muramoyl-L-alanyl-D-glutamate + ADP + phosphate + H(+). It functions in the pathway cell wall biogenesis; peptidoglycan biosynthesis. Its function is as follows. Cell wall formation. Catalyzes the addition of glutamate to the nucleotide precursor UDP-N-acetylmuramoyl-L-alanine (UMA). In Baumannia cicadellinicola subsp. Homalodisca coagulata, this protein is UDP-N-acetylmuramoylalanine--D-glutamate ligase.